The following is a 381-amino-acid chain: Probable serine/threonine-protein kinase PBL22 (381 aa).

Cys-3 is lipidated: S-palmitoyl cysteine. The residue at position 64 (Thr-64) is a Phosphothreonine. A Protein kinase domain is found at 75–351 (FREGNIIGKG…GDVVVAFEYI (277 aa)). ATP is bound by residues 81–89 (IGKGGFGSV) and Lys-103. Tyr-148 is modified (phosphotyrosine). Asp-201 (proton acceptor) is an active-site residue. Position 235 is a phosphoserine (Ser-235). Phosphothreonine occurs at positions 236 and 241. The residue at position 249 (Tyr-249) is a Phosphotyrosine. The tract at residues 361-381 (RRTARKSTDSNRLRRETKQSY) is disordered.

It belongs to the protein kinase superfamily. Ser/Thr protein kinase family. Post-translationally, palmitoylation at Cys-3 and Cys-6 are required for plasma membrane location.

The protein resides in the cell membrane. It carries out the reaction L-seryl-[protein] + ATP = O-phospho-L-seryl-[protein] + ADP + H(+). The catalysed reaction is L-threonyl-[protein] + ATP = O-phospho-L-threonyl-[protein] + ADP + H(+). In terms of biological role, may be involved in plant defense signaling. This is Probable serine/threonine-protein kinase PBL22 from Arabidopsis thaliana (Mouse-ear cress).